Reading from the N-terminus, the 246-residue chain is Probable transcriptional regulatory protein YebC (246 aa).

Residues 1-20 (MAGHSKWANTRHRKAAQDAK) are disordered.

The protein belongs to the TACO1 family.

It is found in the cytoplasm. The polypeptide is Probable transcriptional regulatory protein YebC (Salmonella typhimurium (strain LT2 / SGSC1412 / ATCC 700720)).